The following is a 236-amino-acid chain: 2-C-methyl-D-erythritol 4-phosphate cytidylyltransferase (236 aa).

It belongs to the IspD/TarI cytidylyltransferase family. IspD subfamily.

It carries out the reaction 2-C-methyl-D-erythritol 4-phosphate + CTP + H(+) = 4-CDP-2-C-methyl-D-erythritol + diphosphate. Its pathway is isoprenoid biosynthesis; isopentenyl diphosphate biosynthesis via DXP pathway; isopentenyl diphosphate from 1-deoxy-D-xylulose 5-phosphate: step 2/6. In terms of biological role, catalyzes the formation of 4-diphosphocytidyl-2-C-methyl-D-erythritol from CTP and 2-C-methyl-D-erythritol 4-phosphate (MEP). This is 2-C-methyl-D-erythritol 4-phosphate cytidylyltransferase from Alkaliphilus oremlandii (strain OhILAs) (Clostridium oremlandii (strain OhILAs)).